We begin with the raw amino-acid sequence, 325 residues long: Apoptosis-enhancing nuclease (325 aa).

Positions 27–35 (RKRHKRRSR) match the Nucleolar localization signal motif. Residues 85 to 105 (RAGSGSAPCSRRPAPGKASGP) are disordered. The Exonuclease domain maps to 110-266 (CVAIDCEMVG…EDATTAMELY (157 aa)). The Nuclear localization signal signature appears at 165 to 188 (RQHMRKAVPFQVAQKEILKLLKGK). Residues 281-325 (LWTCPEDREPDSSTDMEQYMEDQYWPDDLAHGSRGGAREAQDRRN) form a disordered region. Basic and acidic residues predominate over residues 308-325 (DLAHGSRGGAREAQDRRN).

It localises to the nucleus. Its subcellular location is the nucleolus. Exonuclease with activity against single- and double-stranded DNA and RNA. Mediates p53-induced apoptosis. When induced by p53 following DNA damage, digests double-stranded DNA to form single-stranded DNA and amplifies DNA damage signals, leading to enhancement of apoptosis. The polypeptide is Apoptosis-enhancing nuclease (AEN) (Homo sapiens (Human)).